Consider the following 477-residue polypeptide: MANMQGLVERLERAVSRLESLSAESHRPPGNCGEVNGVIAGVAPSVEAFDKLMDSMVAEFLKNSRILAGDVETHAEMVHSAFQAQRAFLLMASQYQQPHENDVAALLKPISEKIQEIQTFRERNRGSNMFNHLSAVSESIPALGWIAVSPKPGPYVKEMNDAATFYTNRVLKDYKHSDLRHVDWVKSYLNIWSELQAYIKEHHTTGLTWSKTGPVASTVSAFSVLSSGPGLPPPPPPLPPPGPPPLFENEGKKEESSPSRSALFAQLNQGEAITKGLRHVTDDQKTYKNPSLRAQGGQTQSPTKSHTPSPTSPKSYPSQKHAPVLELEGKKWRVEYQEDRNDLVISETELKQVAYIFKCEKSTIQIKGKVNSIIIDNCKKLGLVFDNVVGIVEVINSQDIQIQVMGRVPTISINKTEGCHIYLSEDALDCEIVSAKSSEMNILIPQDGDYREFPIPEQFKTAWDGSKLITEPAEIMA.

Ala2 is subject to N-acetylalanine. 2 disordered regions span residues Leu225–Ser261 and Thr274–His321. The segment covering Gly230–Leu246 has biased composition (pro residues). Low complexity predominate over residues Gln298–Lys320. Ser301 and Ser309 each carry phosphoserine. The C-CAP/cofactor C-like domain maps to Pro317 to Ile455.

Belongs to the CAP family.

Its subcellular location is the cell membrane. Involved in the regulation of actin polymerization. In Homo sapiens (Human), this protein is Adenylyl cyclase-associated protein 2 (CAP2).